An 83-amino-acid chain; its full sequence is Small ribosomal subunit protein bS16 (83 aa).

The protein belongs to the bacterial ribosomal protein bS16 family.

The protein is Small ribosomal subunit protein bS16 of Shewanella halifaxensis (strain HAW-EB4).